The sequence spans 109 residues: Aquaporin-2 (109 aa).

Residues 1–6 lie on the Cytoplasmic side of the membrane; it reads SIAFSK. A helical membrane pass occupies residues 7 to 27; it reads AVFSEFLATLLFVFFGLGSAL. The Extracellular portion of the chain corresponds to 28–35; that stretch reads NWPQALPS. Residues 36-54 traverse the membrane as a helical segment; that stretch reads GLQIAMAFGLAIGTLVQTL. The Cytoplasmic portion of the chain corresponds to 55–59; the sequence is GHISG. Positions 60 to 69 form an intramembrane region, discontinuously helical; it reads AHINPAVTVA. The NPA 1 signature appears at 63-65; sequence NPA. At 70-80 the chain is on the cytoplasmic side; sequence CLVGCHVSFLR. Residues 81–102 traverse the membrane as a helical segment; sequence AIFYVAAQLLGAVAGAALLHEL. The Extracellular portion of the chain corresponds to 103 to 109; sequence TPPDIRG.

The protein belongs to the MIP/aquaporin (TC 1.A.8) family. As to quaternary structure, homotetramer. In terms of processing, serine phosphorylation is necessary and sufficient for expression at the apical membrane. Endocytosis is not phosphorylation-dependent. Post-translationally, N-glycosylated.

Its subcellular location is the apical cell membrane. The protein resides in the basolateral cell membrane. The protein localises to the cell membrane. It is found in the cytoplasmic vesicle membrane. It localises to the golgi apparatus. Its subcellular location is the trans-Golgi network membrane. The catalysed reaction is H2O(in) = H2O(out). It carries out the reaction glycerol(in) = glycerol(out). Functionally, forms a water-specific channel that provides the plasma membranes of renal collecting duct with high permeability to water, thereby permitting water to move in the direction of an osmotic gradient. Plays an essential role in renal water homeostasis. Could also be permeable to glycerol. In Orycteropus afer (Aardvark), this protein is Aquaporin-2.